We begin with the raw amino-acid sequence, 215 residues long: Pyrrolidone-carboxylate peptidase (215 aa).

Residues glutamate 78, cysteine 141, and histidine 165 contribute to the active site.

Belongs to the peptidase C15 family. In terms of assembly, homotetramer.

The protein resides in the cytoplasm. It catalyses the reaction Release of an N-terminal pyroglutamyl group from a polypeptide, the second amino acid generally not being Pro.. Its function is as follows. Removes 5-oxoproline from various penultimate amino acid residues except L-proline. The sequence is that of Pyrrolidone-carboxylate peptidase from Lactobacillus johnsonii (strain CNCM I-12250 / La1 / NCC 533).